A 32-amino-acid chain; its full sequence is Photosystem II reaction center protein T (32 aa).

A helical membrane pass occupies residues Ser3 to Phe23.

The protein belongs to the PsbT family. PSII is composed of 1 copy each of membrane proteins PsbA, PsbB, PsbC, PsbD, PsbE, PsbF, PsbH, PsbI, PsbJ, PsbK, PsbL, PsbM, PsbT, PsbX, PsbY, PsbZ, Psb30/Ycf12, peripheral proteins PsbO, CyanoQ (PsbQ), PsbU, PsbV and a large number of cofactors. It forms dimeric complexes.

The protein localises to the cellular thylakoid membrane. Functionally, found at the monomer-monomer interface of the photosystem II (PS II) dimer, plays a role in assembly and dimerization of PSII. PSII is a light-driven water plastoquinone oxidoreductase, using light energy to abstract electrons from H(2)O, generating a proton gradient subsequently used for ATP formation. The protein is Photosystem II reaction center protein T of Cyanothece sp. (strain PCC 7425 / ATCC 29141).